We begin with the raw amino-acid sequence, 140 residues long: Nucleoside diphosphate kinase (140 aa).

6 residues coordinate ATP: K11, F59, R87, T93, R104, and N114. Catalysis depends on H117, which acts as the Pros-phosphohistidine intermediate.

This sequence belongs to the NDK family. Homotetramer. The cofactor is Mg(2+).

It localises to the cytoplasm. The enzyme catalyses a 2'-deoxyribonucleoside 5'-diphosphate + ATP = a 2'-deoxyribonucleoside 5'-triphosphate + ADP. It catalyses the reaction a ribonucleoside 5'-diphosphate + ATP = a ribonucleoside 5'-triphosphate + ADP. Functionally, major role in the synthesis of nucleoside triphosphates other than ATP. The ATP gamma phosphate is transferred to the NDP beta phosphate via a ping-pong mechanism, using a phosphorylated active-site intermediate. The chain is Nucleoside diphosphate kinase from Rickettsia conorii (strain ATCC VR-613 / Malish 7).